The following is a 190-amino-acid chain: Large ribosomal subunit protein eL15 (190 aa).

It belongs to the eukaryotic ribosomal protein eL15 family.

The polypeptide is Large ribosomal subunit protein eL15 (rpl15e) (Nanoarchaeum equitans (strain Kin4-M)).